A 280-amino-acid polypeptide reads, in one-letter code: F420-dependent methylenetetrahydromethanopterin dehydrogenase (280 aa).

It belongs to the MTD family.

The catalysed reaction is 5,10-methylenetetrahydromethanopterin + oxidized coenzyme F420-(gamma-L-Glu)(n) + 2 H(+) = 5,10-methenyl-5,6,7,8-tetrahydromethanopterin + reduced coenzyme F420-(gamma-L-Glu)(n). Its pathway is one-carbon metabolism; methanogenesis from CO(2); 5,10-methylene-5,6,7,8-tetrahydromethanopterin from 5,10-methenyl-5,6,7,8-tetrahydromethanopterin (coenzyme F420 route): step 1/1. In terms of biological role, catalyzes the reversible reduction of methenyl-H(4)MPT(+) to methylene-H(4)MPT. The chain is F420-dependent methylenetetrahydromethanopterin dehydrogenase from Methanosphaerula palustris (strain ATCC BAA-1556 / DSM 19958 / E1-9c).